Reading from the N-terminus, the 508-residue chain is Photosystem II CP47 reaction center protein (508 aa).

6 consecutive transmembrane segments (helical) span residues 21-36 (SVHIMHTALVAGWAGS), 101-115 (IVFSGLCFLAAIWHW), 140-156 (GIHLFLAGVACFGFGAF), 203-218 (IAAGTLGILAGLFHLS), 237-252 (VLSSSIAAVFFAAFVV), and 457-472 (SFALLFFFGHIWHGAR).

This sequence belongs to the PsbB/PsbC family. PsbB subfamily. In terms of assembly, PSII is composed of 1 copy each of membrane proteins PsbA, PsbB, PsbC, PsbD, PsbE, PsbF, PsbH, PsbI, PsbJ, PsbK, PsbL, PsbM, PsbT, PsbX, PsbY, PsbZ, Psb30/Ycf12, at least 3 peripheral proteins of the oxygen-evolving complex and a large number of cofactors. It forms dimeric complexes. Binds multiple chlorophylls. PSII binds additional chlorophylls, carotenoids and specific lipids. is required as a cofactor.

Its subcellular location is the plastid. It localises to the chloroplast thylakoid membrane. In terms of biological role, one of the components of the core complex of photosystem II (PSII). It binds chlorophyll and helps catalyze the primary light-induced photochemical processes of PSII. PSII is a light-driven water:plastoquinone oxidoreductase, using light energy to abstract electrons from H(2)O, generating O(2) and a proton gradient subsequently used for ATP formation. This is Photosystem II CP47 reaction center protein from Phaseolus vulgaris (Kidney bean).